The chain runs to 179 residues: Replication restart protein DnaT (179 aa).

Residues 156-179 (GGLPKRDVNTVSEPDSQIPPGFRG) form a disordered region.

The protein belongs to the DnaT family. In terms of assembly, homooligomerizes. Interacts with PriB. Component of the replication restart primosome. Primosome assembly occurs via a 'hand-off' mechanism. PriA binds to replication forks, subsequently PriB then DnaT bind; DnaT then displaces ssDNA to generate the helicase loading substrate.

Its function is as follows. Involved in the restart of stalled replication forks, which reloads the replicative helicase on sites other than the origin of replication. Can function in multiple replication restart pathways. Displaces ssDNA from a PriB-ssDNA complex. Probably forms a spiral filament on ssDNA. This is Replication restart protein DnaT from Escherichia coli (strain ATCC 8739 / DSM 1576 / NBRC 3972 / NCIMB 8545 / WDCM 00012 / Crooks).